Consider the following 213-residue polypeptide: Probable elongation factor 1-beta/1-delta 1 (213 aa).

The protein belongs to the EF-1-beta/EF-1-delta family. In terms of assembly, EF-1 is composed of 4 subunits: alpha, beta, delta, and gamma.

Functionally, EF-1-beta and EF-1-delta stimulate the exchange of GDP bound to EF-1-alpha to GTP. The sequence is that of Probable elongation factor 1-beta/1-delta 1 (eef-1B.1) from Caenorhabditis elegans.